The primary structure comprises 185 residues: ATP synthase subunit delta (185 aa).

This sequence belongs to the ATPase delta chain family. In terms of assembly, F-type ATPases have 2 components, F(1) - the catalytic core - and F(0) - the membrane proton channel. F(1) has five subunits: alpha(3), beta(3), gamma(1), delta(1), epsilon(1). CF(0) has four main subunits: a(1), b(1), b'(1) and c(10-14). The alpha and beta chains form an alternating ring which encloses part of the gamma chain. F(1) is attached to F(0) by a central stalk formed by the gamma and epsilon chains, while a peripheral stalk is formed by the delta, b and b' chains.

It localises to the cellular thylakoid membrane. Its function is as follows. F(1)F(0) ATP synthase produces ATP from ADP in the presence of a proton or sodium gradient. F-type ATPases consist of two structural domains, F(1) containing the extramembraneous catalytic core and F(0) containing the membrane proton channel, linked together by a central stalk and a peripheral stalk. During catalysis, ATP synthesis in the catalytic domain of F(1) is coupled via a rotary mechanism of the central stalk subunits to proton translocation. In terms of biological role, this protein is part of the stalk that links CF(0) to CF(1). It either transmits conformational changes from CF(0) to CF(1) or is implicated in proton conduction. This Synechocystis sp. (strain ATCC 27184 / PCC 6803 / Kazusa) protein is ATP synthase subunit delta.